We begin with the raw amino-acid sequence, 102 residues long: Phosphoribosyl-ATP pyrophosphatase (102 aa).

The protein belongs to the PRA-PH family.

The protein localises to the cytoplasm. The enzyme catalyses 1-(5-phospho-beta-D-ribosyl)-ATP + H2O = 1-(5-phospho-beta-D-ribosyl)-5'-AMP + diphosphate + H(+). It functions in the pathway amino-acid biosynthesis; L-histidine biosynthesis; L-histidine from 5-phospho-alpha-D-ribose 1-diphosphate: step 2/9. In Jannaschia sp. (strain CCS1), this protein is Phosphoribosyl-ATP pyrophosphatase.